Reading from the N-terminus, the 718-residue chain is Heme peroxidase 2 (718 aa).

A signal peptide spans methionine 1–threonine 19. Residues phenylalanine 20–proline 146 constitute a propeptide that is removed on maturation. 2 disordered regions span residues arginine 41–aspartate 64 and leucine 108–serine 144. The segment covering asparagine 45–aspartate 64 has biased composition (polar residues). Positions leucine 109–threonine 118 are enriched in low complexity. Over residues serine 126–asparagine 139 the composition is skewed to basic residues. A disulfide bridge connects residues cysteine 149 and cysteine 164. The active-site Proton acceptor is the histidine 241. Aspartate 242 lines the Ca(2+) pocket. Cysteine 262 and cysteine 272 are joined by a disulfide. 4 residues coordinate Ca(2+): serine 311, phenylalanine 313, aspartate 315, and serine 317. N-linked (GlcNAc...) asparagine glycosylation is present at asparagine 354. Cysteine 358 and cysteine 366 are disulfide-bonded. Histidine 477 contacts heme b. Residues asparagine 551, asparagine 592, asparagine 662, and asparagine 673 are each glycosylated (N-linked (GlcNAc...) asparagine). A disulfide bridge connects residues cysteine 682 and cysteine 705.

This sequence belongs to the peroxidase family. The cofactor is heme b. As to expression, expressed in the hypodermis and gland cells of the pharynx. Specifically, there is low and transient expression from the distal bulb of the pharynx to the anterior of the buccal cavity. Whole body expression levels increase upon entry into the dauer phase.

It is found in the secreted. The catalysed reaction is 2 a phenolic donor + H2O2 = 2 a phenolic radical donor + 2 H2O. In terms of biological role, peroxidase which is involved in maintaining the cuticle integrity in the hypodermis and pharynx. It thus plays a role in conferring resistance against Gram-positive bacteria such as E.faecalis, S.aureus and C.diphtheriae, and yeast such as C.albicans. This chain is Heme peroxidase 2, found in Caenorhabditis elegans.